Consider the following 238-residue polypeptide: Ribonuclease PH (238 aa).

Residues R86 and 124 to 126 (GTR) each bind phosphate.

The protein belongs to the RNase PH family. As to quaternary structure, homohexameric ring arranged as a trimer of dimers.

The catalysed reaction is tRNA(n+1) + phosphate = tRNA(n) + a ribonucleoside 5'-diphosphate. Its function is as follows. Phosphorolytic 3'-5' exoribonuclease that plays an important role in tRNA 3'-end maturation. Removes nucleotide residues following the 3'-CCA terminus of tRNAs; can also add nucleotides to the ends of RNA molecules by using nucleoside diphosphates as substrates, but this may not be physiologically important. Probably plays a role in initiation of 16S rRNA degradation (leading to ribosome degradation) during starvation. The sequence is that of Ribonuclease PH from Mesorhizobium japonicum (strain LMG 29417 / CECT 9101 / MAFF 303099) (Mesorhizobium loti (strain MAFF 303099)).